The following is a 137-amino-acid chain: Fluoride-specific ion channel FluC 1 (137 aa).

The next 4 helical transmembrane spans lie at 4–24 (LIYIIVGIAGILGALSRYYLG), 37–57 (LATLLINLAGCFLLAWLTTYI), 67–87 (VITGIGTGFIGSFTTFSTFSV), and 100–120 (IAFLYVSCSILGGLIMSGLGY). Positions 77 and 80 each coordinate Na(+).

This sequence belongs to the fluoride channel Fluc/FEX (TC 1.A.43) family.

It is found in the cell membrane. The catalysed reaction is fluoride(in) = fluoride(out). With respect to regulation, na(+) is not transported, but it plays an essential structural role and its presence is essential for fluoride channel function. Its function is as follows. Fluoride-specific ion channel. Important for reducing fluoride concentration in the cell, thus reducing its toxicity. In Bacillus thuringiensis subsp. konkukian (strain 97-27), this protein is Fluoride-specific ion channel FluC 1.